The sequence spans 155 residues: Chromosomal passenger complex protein bir-1 (155 aa).

The BIR repeat unit spans residues 20-87 (RLMTFKNFEY…KRDEPCEFVR (68 aa)). Positions 57, 60, 76, and 83 each coordinate Zn(2+).

The protein belongs to the IAP family. As to quaternary structure, component of the CPC complex which consists of icp-1; csc-1; bir-1 and air-2. Within the complex, interacts with csc-1, icp-1 and air-2. Interacts with csc-1 in a zinc-dependent-manner; the interaction is direct. In terms of tissue distribution, expressed in oocytes and sperm.

It localises to the chromosome. The protein localises to the cytoplasm. Its subcellular location is the cytoskeleton. It is found in the spindle. The protein resides in the midbody. In terms of biological role, component of the chromosomal passenger complex (CPC), a complex that acts as a key regulator of chromosome segregation and cytokinesis. The CPC complex has essential functions at the centromere in ensuring correct chromosome condensation, alignment and segregation. In the complex, required to direct the Aurora B/air-2 kinase to chromosomes. Also functions in spindle midzone formation and in the formation of polar bodies during oogenesis. Required for the localization of the kinetochore component hcp-1 to chromosomes. Involved in the positive regulation of transcription. Involved in the transcriptional regulation of collagen genes. The sequence is that of Chromosomal passenger complex protein bir-1 from Caenorhabditis elegans.